Reading from the N-terminus, the 345-residue chain is D-alanine--D-alanine ligase (345 aa).

The 208-residue stretch at 133 to 340 (KLYAKERGVK…IDYRYIHQIQ (208 aa)) folds into the ATP-grasp domain. 162–211 (PLIVKPLRLGSSIGVSIAKNRQELDYALDVAFEFDEAALLEPFMQGIKEY) lines the ATP pocket. Positions 284, 296, and 298 each coordinate Mg(2+).

It belongs to the D-alanine--D-alanine ligase family. The cofactor is Mg(2+). Requires Mn(2+) as cofactor.

Its subcellular location is the cytoplasm. It catalyses the reaction 2 D-alanine + ATP = D-alanyl-D-alanine + ADP + phosphate + H(+). It functions in the pathway cell wall biogenesis; peptidoglycan biosynthesis. Its function is as follows. Cell wall formation. This Wolinella succinogenes (strain ATCC 29543 / DSM 1740 / CCUG 13145 / JCM 31913 / LMG 7466 / NCTC 11488 / FDC 602W) (Vibrio succinogenes) protein is D-alanine--D-alanine ligase.